A 155-amino-acid polypeptide reads, in one-letter code: Protein-export protein SecB (155 aa).

The protein belongs to the SecB family. Homotetramer, a dimer of dimers. One homotetramer interacts with 1 SecA dimer.

Its subcellular location is the cytoplasm. In terms of biological role, one of the proteins required for the normal export of preproteins out of the cell cytoplasm. It is a molecular chaperone that binds to a subset of precursor proteins, maintaining them in a translocation-competent state. It also specifically binds to its receptor SecA. The chain is Protein-export protein SecB from Citrobacter koseri (strain ATCC BAA-895 / CDC 4225-83 / SGSC4696).